Reading from the N-terminus, the 187-residue chain is UPF0167 protein MT2352 (187 aa).

The protein belongs to the UPF0167 family.

The chain is UPF0167 protein MT2352 from Mycobacterium tuberculosis (strain CDC 1551 / Oshkosh).